Reading from the N-terminus, the 340-residue chain is Methionine import ATP-binding protein MetN 2 (340 aa).

Residues Ile2 to Val241 enclose the ABC transporter domain. Gly38 to Ser45 is an ATP binding site.

Belongs to the ABC transporter superfamily. Methionine importer (TC 3.A.1.24) family. In terms of assembly, the complex is composed of two ATP-binding proteins (MetN), two transmembrane proteins (MetI) and a solute-binding protein (MetQ).

It localises to the cell membrane. It catalyses the reaction L-methionine(out) + ATP + H2O = L-methionine(in) + ADP + phosphate + H(+). The catalysed reaction is D-methionine(out) + ATP + H2O = D-methionine(in) + ADP + phosphate + H(+). Its function is as follows. Part of the ABC transporter complex MetNIQ involved in methionine import. Responsible for energy coupling to the transport system. The chain is Methionine import ATP-binding protein MetN 2 from Listeria monocytogenes serotype 4b (strain F2365).